A 591-amino-acid chain; its full sequence is Formate--tetrahydrofolate ligase (591 aa).

74 to 81 (TPLGEGKS) serves as a coordination point for ATP.

Belongs to the formate--tetrahydrofolate ligase family.

The enzyme catalyses (6S)-5,6,7,8-tetrahydrofolate + formate + ATP = (6R)-10-formyltetrahydrofolate + ADP + phosphate. The protein operates within one-carbon metabolism; tetrahydrofolate interconversion. The protein is Formate--tetrahydrofolate ligase of Desulfovibrio desulfuricans (strain ATCC 27774 / DSM 6949 / MB).